Consider the following 324-residue polypeptide: Olfactory receptor 4K15 (324 aa).

Residues 1 to 25 (MNETNHSRVTEFVLLGLSSSRELQP) are Extracellular-facing. N-linked (GlcNAc...) asparagine glycosylation is found at Asn-2 and Asn-5. A helical membrane pass occupies residues 26 to 49 (FLFLTFSLLYLAILLGNFLIILTV). Over 50-57 (TSDSRLHT) the chain is Cytoplasmic. Residues 58–79 (PMYFLLANLSFIDVCVASFATP) traverse the membrane as a helical segment. At 80–100 (KMIADFLVERKTISFDACLAQ) the chain is on the extracellular side. Cys-97 and Cys-189 are disulfide-bonded. Residues 101 to 120 (IFFVHLFTGSEMVLLVSMAY) traverse the membrane as a helical segment. Topologically, residues 121 to 139 (DRYVAICKPLHYMTVMSRR) are cytoplasmic. The chain crosses the membrane as a helical span at residues 140-158 (VCVVLVLISWFVGFIHTTS). Residues 159-195 (QLAFTVNLPFCGPNKVDSFFCDLPLVTKLACIDTYVV) lie on the Extracellular side of the membrane. Residues 196 to 219 (SLLIVADSGFLSLSSFLLLVVSYT) form a helical membrane-spanning segment. At 220-235 (VILVTVRNRSSASMAK) the chain is on the cytoplasmic side. A helical membrane pass occupies residues 236 to 258 (ARSTLTAHITVVTLFFGPCIFIY). The Extracellular segment spans residues 259–269 (VWPFSSYSVDK). Residues 270–289 (VLAVFYTIFTLILNPVIYTL) form a helical membrane-spanning segment. The Cytoplasmic portion of the chain corresponds to 290–324 (RNKEVKAAMSKLKSRYLKPSQVSVVIRNVLFLETK).

Belongs to the G-protein coupled receptor 1 family.

It localises to the cell membrane. Functionally, odorant receptor. In Homo sapiens (Human), this protein is Olfactory receptor 4K15 (OR4K15).